A 310-amino-acid polypeptide reads, in one-letter code: Homoserine kinase (310 aa).

91–101 (PIGSGLGSSAC) is an ATP binding site.

Belongs to the GHMP kinase family. Homoserine kinase subfamily.

It localises to the cytoplasm. It carries out the reaction L-homoserine + ATP = O-phospho-L-homoserine + ADP + H(+). The protein operates within amino-acid biosynthesis; L-threonine biosynthesis; L-threonine from L-aspartate: step 4/5. Catalyzes the ATP-dependent phosphorylation of L-homoserine to L-homoserine phosphate. This Escherichia coli O81 (strain ED1a) protein is Homoserine kinase.